A 1159-amino-acid polypeptide reads, in one-letter code: WASH complex subunit 5 (1159 aa).

Belongs to the strumpellin family. As to quaternary structure, component of the WASH complex.

The protein localises to the early endosome. Its function is as follows. Acts at least in part as component of the WASH complex which seems to regulate washc1 nucleation-promoting factor (NPF) activity and is required for its membrane targeting during endosomal sorting. The sequence is that of WASH complex subunit 5 from Danio rerio (Zebrafish).